A 143-amino-acid chain; its full sequence is Ribonuclease HI (143 aa).

The 136-residue stretch at 1 to 136 folds into the RNase H type-1 domain; that stretch reads MQEIEIFCDG…CNSLAKLEAQ (136 aa). 4 residues coordinate Mg(2+): Asp-9, Glu-47, Asp-69, and Asn-128.

Belongs to the RNase H family. In terms of assembly, monomer. It depends on Mg(2+) as a cofactor.

The protein localises to the cytoplasm. The enzyme catalyses Endonucleolytic cleavage to 5'-phosphomonoester.. Endonuclease that specifically degrades the RNA of RNA-DNA hybrids. This is Ribonuclease HI (rnhA) from Helicobacter pylori (strain J99 / ATCC 700824) (Campylobacter pylori J99).